The sequence spans 72 residues: uncharacterized protein (72 aa).

The protein belongs to the ycf76 family.

The protein localises to the plastid. It is found in the chloroplast. This is an uncharacterized protein from Oryza nivara (Indian wild rice).